A 316-amino-acid chain; its full sequence is N-acetylmuramic acid 6-phosphate etherase (316 aa).

Residues 1-24 (MTRFQSDAAVSADRGHLMTEQPNP) are disordered. In terms of domain architecture, SIS spans 66 to 229 (IASRLKDGGR…STAVMVRLGK (164 aa)). The active-site Proton donor is the Glu94. The active site involves Glu125.

Belongs to the GCKR-like family. MurNAc-6-P etherase subfamily. Homodimer.

It catalyses the reaction N-acetyl-D-muramate 6-phosphate + H2O = N-acetyl-D-glucosamine 6-phosphate + (R)-lactate. Its pathway is amino-sugar metabolism; N-acetylmuramate degradation. Specifically catalyzes the cleavage of the D-lactyl ether substituent of MurNAc 6-phosphate, producing GlcNAc 6-phosphate and D-lactate. This Parasynechococcus marenigrum (strain WH8102) protein is N-acetylmuramic acid 6-phosphate etherase.